The following is an 857-amino-acid chain: Envelope glycoprotein B (857 aa).

The signal sequence occupies residues 1–21 (MTRRRVLSVVVLLAALACRLG). Over 22-732 (AQTPEQPAPP…SGFISFFKNP (711 aa)) the chain is Virion surface. Cystine bridges form between cysteine 51–cysteine 528, cysteine 68–cysteine 484, cysteine 141–cysteine 206, cysteine 295–cysteine 342, and cysteine 551–cysteine 588. N-linked (GlcNAc...) asparagine; by host glycosylation is present at asparagine 76. Residues 108–114 (IYNGWYA) form an involved in fusion and/or binding to host membrane region. Asparagine 163 is a glycosylation site (N-linked (GlcNAc...) asparagine; by host). Positions 192–200 (GWLIWTYRT) are involved in fusion and/or binding to host membrane. Residues asparagine 290, asparagine 329, asparagine 348, and asparagine 395 are each glycosylated (N-linked (GlcNAc...) asparagine; by host). A disordered region spans residues 398–453 (ELTTPTSSPPSSPSPPAPSAARGSTPAAVLRRRRRDAGNATTPVPPTAPGKSLGTL). Residues 404–415 (SSPPSSPSPPAP) show a composition bias toward pro residues. Over residues 416–425 (SAARGSTPAA) the composition is skewed to low complexity. N-linked (GlcNAc...) asparagine; by host glycosylation is found at asparagine 436, asparagine 563, and asparagine 629. The segment at 561 to 620 (FINDTKTYEGQLGTDNEIFLTKKMTEVCQATSQYYFQSGNEIHVYNDYHHFKTIELDGIA) is oligomerization. 2 hydrophobic membrane proximal region regions span residues 678–730 (LDNA…SFFK) and 709–729 (NLVS…ISFF). Residues 733–753 (FGGMLILVLVAGVVILVISLT) form a helical membrane-spanning segment. At 754-857 (RRTRQMSQQP…ALLGEAETEF (104 aa)) the chain is on the intravirion side. Positions 832-857 (FPGLRRRRYHDPETAAALLGEAETEF) are disordered. Low complexity predominate over residues 845-857 (TAAALLGEAETEF).

Belongs to the herpesviridae glycoprotein B family. In terms of assembly, homotrimer; disulfide-linked. Binds to heparan sulfate proteoglycans. Interacts with gH/gL heterodimer. A proteolytic cleavage by host furin generates two subunits that remain linked by disulfide bonds.

The protein localises to the virion membrane. Its subcellular location is the host cell membrane. The protein resides in the host endosome membrane. It localises to the host Golgi apparatus membrane. Its function is as follows. Envelope glycoprotein that forms spikes at the surface of virion envelope. Essential for the initial attachment to heparan sulfate moieties of the host cell surface proteoglycans. Involved in fusion of viral and cellular membranes leading to virus entry into the host cell. Following initial binding to its host receptors, membrane fusion is mediated by the fusion machinery composed at least of gB and the heterodimer gH/gL. May be involved in the fusion between the virion envelope and the outer nuclear membrane during virion egress. This is Envelope glycoprotein B from Epstein-Barr virus (strain B95-8) (HHV-4).